The following is a 79-amino-acid chain: Probable [Fe-S]-dependent transcriptional repressor (79 aa).

Iron-sulfur cluster is bound by residues C56, C61, C64, and C71.

This sequence belongs to the FeoC family.

May function as a transcriptional regulator that controls feoABC expression. The chain is Probable [Fe-S]-dependent transcriptional repressor from Klebsiella pneumoniae (strain 342).